The primary structure comprises 302 residues: Phosphatidylglycerol--prolipoprotein diacylglyceryl transferase (302 aa).

A run of 7 helical transmembrane segments spans residues 19–39 (FGPL…LLGW), 67–87 (LVLW…FVFY), 108–128 (IWEG…AIIL), 143–163 (LIAP…FING), 203–223 (QLYE…FAIY), 232–252 (GALV…LENV), and 264–284 (LGLT…GWLL). Arg-156 lines the a 1,2-diacyl-sn-glycero-3-phospho-(1'-sn-glycerol) pocket.

This sequence belongs to the Lgt family.

It is found in the cell inner membrane. It catalyses the reaction L-cysteinyl-[prolipoprotein] + a 1,2-diacyl-sn-glycero-3-phospho-(1'-sn-glycerol) = an S-1,2-diacyl-sn-glyceryl-L-cysteinyl-[prolipoprotein] + sn-glycerol 1-phosphate + H(+). It participates in protein modification; lipoprotein biosynthesis (diacylglyceryl transfer). Its function is as follows. Catalyzes the transfer of the diacylglyceryl group from phosphatidylglycerol to the sulfhydryl group of the N-terminal cysteine of a prolipoprotein, the first step in the formation of mature lipoproteins. The polypeptide is Phosphatidylglycerol--prolipoprotein diacylglyceryl transferase (Caulobacter vibrioides (strain ATCC 19089 / CIP 103742 / CB 15) (Caulobacter crescentus)).